The following is a 400-amino-acid chain: Acetate kinase (400 aa).

Asn-7 is a binding site for Mg(2+). Lys-14 contacts ATP. Arg-90 contacts substrate. Asp-147 serves as the catalytic Proton donor/acceptor. ATP is bound by residues 207 to 211 (HLGNG), 282 to 284 (DFR), and 331 to 335 (GIGEN). Glu-384 is a Mg(2+) binding site.

Belongs to the acetokinase family. As to quaternary structure, homodimer. The cofactor is Mg(2+). Mn(2+) is required as a cofactor.

Its subcellular location is the cytoplasm. The enzyme catalyses acetate + ATP = acetyl phosphate + ADP. The protein operates within metabolic intermediate biosynthesis; acetyl-CoA biosynthesis; acetyl-CoA from acetate: step 1/2. Catalyzes the formation of acetyl phosphate from acetate and ATP. Can also catalyze the reverse reaction. This chain is Acetate kinase, found in Thermoanaerobacterium thermosaccharolyticum (strain ATCC 7956 / DSM 571 / NCIMB 9385 / NCA 3814 / NCTC 13789 / WDCM 00135 / 2032) (Clostridium thermosaccharolyticum).